The chain runs to 189 residues: Tetratricopeptide repeat protein 36 (189 aa).

TPR repeat units lie at residues 51-84 (SKAL…LPER), 86-118 (SAYN…SGGR), and 123-156 (RQSF…GSPF).

The protein belongs to the TTC36 family.

This is Tetratricopeptide repeat protein 36 (TTC36) from Homo sapiens (Human).